The sequence spans 205 residues: Protein N-terminal glutamine amidohydrolase (205 aa).

Residues Cys-20, His-74, and Asp-90 contribute to the active site.

This sequence belongs to the NTAQ1 family. As to quaternary structure, monomer.

It catalyses the reaction N-terminal L-glutaminyl-[protein] + H2O = N-terminal L-glutamyl-[protein] + NH4(+). Its function is as follows. Mediates the side-chain deamidation of N-terminal glutamine residues to glutamate, an important step in N-end rule pathway of protein degradation. Conversion of the resulting N-terminal glutamine to glutamate renders the protein susceptible to arginylation, polyubiquitination and degradation as specified by the N-end rule. Does not act on substrates with internal or C-terminal glutamine and does not act on non-glutamine residues in any position. This Drosophila melanogaster (Fruit fly) protein is Protein N-terminal glutamine amidohydrolase (tun).